We begin with the raw amino-acid sequence, 355 residues long: Alkanal monooxygenase alpha chain (355 aa).

The protein belongs to the bacterial luciferase oxidoreductase family. Heterodimer of an alpha and a beta chain.

It carries out the reaction a long-chain fatty aldehyde + FMNH2 + O2 = a long-chain fatty acid + hnu + FMN + H2O + 2 H(+). Light-emitting reaction in luminous bacteria. The polypeptide is Alkanal monooxygenase alpha chain (luxA) (Vibrio harveyi (Beneckea harveyi)).